Reading from the N-terminus, the 275-residue chain is Tumor necrosis factor receptor superfamily member 14 (275 aa).

An N-terminal signal peptide occupies residues Met1–Ala38. 3 TNFR-Cys repeats span residues Ser41–Cys75, Pro77–Cys119, and Arg120–Cys162. Intrachain disulfides connect Cys42/Cys53, Cys54/Cys67, Cys57/Cys75, Cys78/Cys93, Cys96/Cys111, Cys99/Cys119, Cys121/Cys138, and Cys144/Cys162. Residues Asn184 and Asn197 are each glycosylated (N-linked (GlcNAc...) asparagine). Residues Val211–Cys231 form a helical membrane-spanning segment.

It belongs to the tumor necrosis factor receptor superfamily. Interacts with TRAF2, TRAF3 and TRAF5. Interacts (via CRD1/TNFR-Cys 1) with CD160; this interaction is direct. Interacts (via CRD1/TNFR-Cys 1) with BTLA; this interaction is direct. N-glycosylated. Expressed at mucosal sites including colon and pulmonary epithelial cells. Expressed in naive T cells.

It localises to the cell membrane. In terms of biological role, receptor for four distinct ligands: The TNF superfamily members TNFSF14/LIGHT and homotrimeric LTA/lymphotoxin-alpha and the immunoglobulin superfamily members BTLA and CD160, altogether defining a complex stimulatory and inhibitory signaling network. Signals via the TRAF2-TRAF3 E3 ligase pathway to promote immune cell survival and differentiation. Participates in bidirectional cell-cell contact signaling between antigen presenting cells and lymphocytes. In response to ligation of TNFSF14/LIGHT, delivers costimulatory signals to T cells, promoting cell proliferation and effector functions. Interacts with CD160 on NK cells, enhancing IFNG production and anti-tumor immune response. In the context of bacterial infection, acts as a signaling receptor on epithelial cells for CD160 from intraepithelial lymphocytes, triggering the production of antimicrobial proteins and pro-inflammatory cytokines. Upon binding to CD160 on activated CD4+ T cells, down-regulates CD28 costimulatory signaling, restricting memory and alloantigen-specific immune response. May interact in cis (on the same cell) or in trans (on other cells) with BTLA. In cis interactions, appears to play an immune regulatory role inhibiting in trans interactions in naive T cells to maintain a resting state. In trans interactions, can predominate during adaptive immune response to provide survival signals to effector T cells. The protein is Tumor necrosis factor receptor superfamily member 14 of Mus musculus (Mouse).